The primary structure comprises 301 residues: Probable alpha-L-glutamate ligase (301 aa).

An ATP-grasp domain is found at 104 to 287 (TQLLARKGIG…IAGTIYAFLE (184 aa)). ATP-binding positions include Lys141, 178–179 (EY), Asp187, and 211–213 (RSN). Asp248, Glu260, and Asn262 together coordinate Mg(2+). Mn(2+) is bound by residues Asp248, Glu260, and Asn262.

Belongs to the RimK family. It depends on Mg(2+) as a cofactor. Mn(2+) is required as a cofactor.

In Alkalilimnicola ehrlichii (strain ATCC BAA-1101 / DSM 17681 / MLHE-1), this protein is Probable alpha-L-glutamate ligase.